Consider the following 469-residue polypeptide: tRNA-2-methylthio-N(6)-dimethylallyladenosine synthase (469 aa).

Residues 27 to 142 (KKVYIRTFGC…LPQMLAQRAR (116 aa)) enclose the MTTase N-terminal domain. [4Fe-4S] cluster-binding residues include cysteine 36, cysteine 73, cysteine 105, cysteine 179, cysteine 183, and cysteine 186. Residues 165-398 (KVDGAAAFVS…QATIEDNVRR (234 aa)) enclose the Radical SAM core domain. One can recognise a TRAM domain in the interval 401-467 (ERRVGTVQRV…PHSLRGEPVL (67 aa)).

The protein belongs to the methylthiotransferase family. MiaB subfamily. Monomer. It depends on [4Fe-4S] cluster as a cofactor.

It localises to the cytoplasm. The enzyme catalyses N(6)-dimethylallyladenosine(37) in tRNA + (sulfur carrier)-SH + AH2 + 2 S-adenosyl-L-methionine = 2-methylsulfanyl-N(6)-dimethylallyladenosine(37) in tRNA + (sulfur carrier)-H + 5'-deoxyadenosine + L-methionine + A + S-adenosyl-L-homocysteine + 2 H(+). Its function is as follows. Catalyzes the methylthiolation of N6-(dimethylallyl)adenosine (i(6)A), leading to the formation of 2-methylthio-N6-(dimethylallyl)adenosine (ms(2)i(6)A) at position 37 in tRNAs that read codons beginning with uridine. This is tRNA-2-methylthio-N(6)-dimethylallyladenosine synthase from Leptothrix cholodnii (strain ATCC 51168 / LMG 8142 / SP-6) (Leptothrix discophora (strain SP-6)).